The primary structure comprises 468 residues: Tubulin gamma chain (468 aa).

142-148 lines the GTP pocket; it reads AGGTGSG.

This sequence belongs to the tubulin family.

Its subcellular location is the cytoplasm. It is found in the cytoskeleton. The protein localises to the microtubule organizing center. Functionally, tubulin is the major constituent of microtubules. The gamma chain is found at microtubule organizing centers (MTOC) such as the spindle poles, suggesting that it is involved in the minus-end nucleation of microtubule assembly. This chain is Tubulin gamma chain (TUBG), found in Chlamydomonas reinhardtii (Chlamydomonas smithii).